The following is a 689-amino-acid chain: Elongation factor G (689 aa).

In terms of domain architecture, tr-type G spans 9–283 (AKFRNIGIMA…AIIEFMPSPL (275 aa)). GTP contacts are provided by residues 18-25 (AHIDAGKT), 82-86 (DTPGH), and 136-139 (NKMD).

This sequence belongs to the TRAFAC class translation factor GTPase superfamily. Classic translation factor GTPase family. EF-G/EF-2 subfamily.

The protein resides in the cytoplasm. Its function is as follows. Catalyzes the GTP-dependent ribosomal translocation step during translation elongation. During this step, the ribosome changes from the pre-translocational (PRE) to the post-translocational (POST) state as the newly formed A-site-bound peptidyl-tRNA and P-site-bound deacylated tRNA move to the P and E sites, respectively. Catalyzes the coordinated movement of the two tRNA molecules, the mRNA and conformational changes in the ribosome. In Clostridium botulinum (strain Okra / Type B1), this protein is Elongation factor G.